Consider the following 434-residue polypeptide: Probable exopolygalacturonase X (434 aa).

The first 23 residues, 1 to 23 (MKFLHTVAQTATLLLSLGASVEG), serve as a signal peptide directing secretion. The tract at residues 35-54 (HHPFRPLPASTPRTKTCHVR) is disordered. Residues Asn113, Asn129, and Asn199 are each glycosylated (N-linked (GlcNAc...) asparagine). The PbH1 1 repeat unit spans residues 231–252 (SSNIVIQNSVVNNGDDCVSFKP). The Proton donor role is filled by Asp245. A disulfide bridge connects residues Cys247 and Cys264. N-linked (GlcNAc...) asparagine glycosylation is found at Asn253 and Asn265. The stretch at 254 to 274 (STDILVQNMHCNGSHGISVGS) is one PbH1 2 repeat. Residue His268 is part of the active site. 5 N-linked (GlcNAc...) asparagine glycosylation sites follow: Asn292, Asn297, Asn329, Asn354, and Asn364. A PbH1 3 repeat occupies 327–348 (VSNITYDRMYIENVDWAIEVTQ). A PbH1 4 repeat occupies 362 to 394 (PSNLTISDVHIKNMWGTTSGKRDPNVGTIVCSS). Cysteines 392 and 398 form a disulfide. N-linked (GlcNAc...) asparagine glycans are attached at residues Asn407 and Asn430.

It belongs to the glycosyl hydrolase 28 family.

It is found in the secreted. It carries out the reaction [(1-&gt;4)-alpha-D-galacturonosyl](n) + H2O = alpha-D-galacturonate + [(1-&gt;4)-alpha-D-galacturonosyl](n-1). Its function is as follows. Specific in hydrolyzing the terminal glycosidic bond of polygalacturonic acid and oligogalacturonates. The chain is Probable exopolygalacturonase X (pgaX) from Aspergillus terreus (strain NIH 2624 / FGSC A1156).